The chain runs to 265 residues: Inositol-1-monophosphatase (265 aa).

Positions 69, 87, 89, and 90 each coordinate Mg(2+). Residue E69 coordinates substrate. Residues 89-92 (IDGT), R185, and D214 each bind substrate. D214 lines the Mg(2+) pocket.

The protein belongs to the inositol monophosphatase superfamily. The cofactor is Mg(2+).

It carries out the reaction a myo-inositol phosphate + H2O = myo-inositol + phosphate. The enzyme catalyses a ribonucleoside 5'-phosphate + H2O = a ribonucleoside + phosphate. Hydrolyzes myo-inositol monophosphate. Catalyzes the dephosphorylation of GMP and IMP. The protein is Inositol-1-monophosphatase of Bacillus subtilis (strain 168).